Here is an 885-residue protein sequence, read N- to C-terminus: Pyruvate, phosphate dikinase (885 aa).

The interval 1 to 342 (MQRVYAFEDG…LYMLQTRNGK (342 aa)) is N-terminal. ATP is bound at residue R91. The linker 1 stretch occupies residues 343–399 (MNATATVRTGVDMVEEGLITKEQAIMRIAPQSVDQLLHKNMPANYAEAPLVKGLPAS). The central stretch occupies residues 400-497 (PGAATGAVVF…EVHEGDILTI (98 aa)). H454 functions as the Tele-phosphohistidine intermediate in the catalytic mechanism. The tract at residues 498–533 (DGSTGCVYKGEVPLEEPQVGSGYFGTILKWANEIKK) is linker 2. Residues 534–885 (IGVFANADLP…QAQIRHPREN (352 aa)) form a C-terminal region. Substrate is bound by residues R561, R617, E752, G773, T774, N775, and D776. Residue E752 participates in Mg(2+) binding. D776 provides a ligand contact to Mg(2+). C839 (proton donor) is an active-site residue.

The protein belongs to the PEP-utilizing enzyme family. As to quaternary structure, homodimer. Mg(2+) is required as a cofactor.

It catalyses the reaction pyruvate + phosphate + ATP = phosphoenolpyruvate + AMP + diphosphate + H(+). Catalyzes the dephosphorylation of phosphoenolpyruvate and diphosphate to produce ATP. This chain is Pyruvate, phosphate dikinase, found in Entamoeba histolytica (strain ATCC 30459 / HM-1:IMSS / ABRM).